We begin with the raw amino-acid sequence, 458 residues long: NADH-quinone oxidoreductase subunit N (458 aa).

Helical transmembrane passes span 2 to 22 (LLLLPEITLTLIALLGQFFAV), 30 to 50 (IISNIIILLCILSIFLTFKYS), 62 to 82 (GINIGISKSIVLLFTIISMII), 94 to 114 (LKFEFITLMLLSVVGIFVAIS), 118 to 138 (FLLLFCGMELTALTSYALAGF), 153 to 173 (FILGSLVSCLSLFGISFIYGF), 194 to 214 (LGLIIGIILFLSSIFFKLSSV), 235 to 255 (FNAASKIGMVIVLLNISKLII), 261 to 281 (INYNLIKIIAILSMLFGAFGA), 290 to 310 (LMAYSTILNIGYVLIGVLLHN), 318 to 338 (LLYMLIYAVGSIGFFTCLIIL), 361 to 381 (IAAVISIVMFSMIGIPPLTGF), 397 to 417 (FALAYCGIFTSVVAAFYYLKV), and 438 to 458 (LLLINYLVVGFLLLGSFIISF).

It belongs to the complex I subunit 2 family. NDH-1 is composed of 14 different subunits. Subunits NuoA, H, J, K, L, M, N constitute the membrane sector of the complex.

The protein resides in the cell inner membrane. It carries out the reaction a quinone + NADH + 5 H(+)(in) = a quinol + NAD(+) + 4 H(+)(out). NDH-1 shuttles electrons from NADH, via FMN and iron-sulfur (Fe-S) centers, to quinones in the respiratory chain. The immediate electron acceptor for the enzyme in this species is believed to be ubiquinone. Couples the redox reaction to proton translocation (for every two electrons transferred, four hydrogen ions are translocated across the cytoplasmic membrane), and thus conserves the redox energy in a proton gradient. The chain is NADH-quinone oxidoreductase subunit N from Rickettsia conorii (strain ATCC VR-613 / Malish 7).